The following is a 367-amino-acid chain: Zinc metalloproteinase nas-22 (367 aa).

Residues methionine 1–glycine 16 form the signal peptide. The Peptidase M12A domain occupies valine 41–serine 237. Asparagine 56 and asparagine 85 each carry an N-linked (GlcNAc...) asparagine glycan. Cystine bridges form between cysteine 88–cysteine 236, cysteine 111–cysteine 130, cysteine 238–cysteine 258, and cysteine 260–cysteine 269. Histidine 138 is a Zn(2+) binding site. Glutamate 139 is a catalytic residue. Zn(2+) is bound by residues histidine 142 and histidine 148. 3 N-linked (GlcNAc...) asparagine glycosylation sites follow: asparagine 169, asparagine 241, and asparagine 254. One can recognise an EGF-like domain in the interval lysine 232–serine 270. 2 N-linked (GlcNAc...) asparagine glycosylation sites follow: asparagine 287 and asparagine 322.

Zn(2+) serves as cofactor. In terms of tissue distribution, expressed in uterine seam (utse) cell.

It localises to the secreted. In terms of biological role, metalloprotease. This Caenorhabditis elegans protein is Zinc metalloproteinase nas-22 (nas-22).